A 301-amino-acid polypeptide reads, in one-letter code: Phosphatidylserine decarboxylase proenzyme (301 aa).

Residues Asp117, His173, and Ser260 each act as charge relay system; for autoendoproteolytic cleavage activity in the active site. Ser260 serves as the catalytic Schiff-base intermediate with substrate; via pyruvic acid; for decarboxylase activity. Ser260 is modified (pyruvic acid (Ser); by autocatalysis).

It belongs to the phosphatidylserine decarboxylase family. PSD-B subfamily. Prokaryotic type II sub-subfamily. In terms of assembly, heterodimer of a large membrane-associated beta subunit and a small pyruvoyl-containing alpha subunit. Pyruvate serves as cofactor. Post-translationally, is synthesized initially as an inactive proenzyme. Formation of the active enzyme involves a self-maturation process in which the active site pyruvoyl group is generated from an internal serine residue via an autocatalytic post-translational modification. Two non-identical subunits are generated from the proenzyme in this reaction, and the pyruvate is formed at the N-terminus of the alpha chain, which is derived from the carboxyl end of the proenzyme. The autoendoproteolytic cleavage occurs by a canonical serine protease mechanism, in which the side chain hydroxyl group of the serine supplies its oxygen atom to form the C-terminus of the beta chain, while the remainder of the serine residue undergoes an oxidative deamination to produce ammonia and the pyruvoyl prosthetic group on the alpha chain. During this reaction, the Ser that is part of the protease active site of the proenzyme becomes the pyruvoyl prosthetic group, which constitutes an essential element of the active site of the mature decarboxylase.

The protein localises to the cell membrane. The catalysed reaction is a 1,2-diacyl-sn-glycero-3-phospho-L-serine + H(+) = a 1,2-diacyl-sn-glycero-3-phosphoethanolamine + CO2. It functions in the pathway phospholipid metabolism; phosphatidylethanolamine biosynthesis; phosphatidylethanolamine from CDP-diacylglycerol: step 2/2. In terms of biological role, catalyzes the formation of phosphatidylethanolamine (PtdEtn) from phosphatidylserine (PtdSer). In Chlamydia trachomatis serovar L2 (strain ATCC VR-902B / DSM 19102 / 434/Bu), this protein is Phosphatidylserine decarboxylase proenzyme.